Consider the following 207-residue polypeptide: MTAVQAARRARIERRTKESDIVIELDLDGTGRVDVETGVPFYDHMLTALGSHASFDLTVRTTGDVEIEAHHTIEDTAIALGAALGQALGDKRGIRRFGDAFIPMDETLAHAAVDVSGRPYCVHSGEPDHLQHSTIAGSSVPYHTVINRHVFESLAMNARIALHVRVLYGRDPHHITEAQYKAVARALRQAVEPDPRVSDVPSTKGVL.

This sequence belongs to the imidazoleglycerol-phosphate dehydratase family.

It is found in the cytoplasm. The enzyme catalyses D-erythro-1-(imidazol-4-yl)glycerol 3-phosphate = 3-(imidazol-4-yl)-2-oxopropyl phosphate + H2O. It participates in amino-acid biosynthesis; L-histidine biosynthesis; L-histidine from 5-phospho-alpha-D-ribose 1-diphosphate: step 6/9. The protein is Imidazoleglycerol-phosphate dehydratase of Mycobacterium avium (strain 104).